The sequence spans 71 residues: DNA gyrase inhibitor YacG (71 aa).

The Zn(2+) site is built by cysteine 9, cysteine 12, cysteine 28, and cysteine 32. A disordered region spans residues glutamate 43–asparagine 71. Residues asparagine 54–glutamate 64 show a composition bias toward acidic residues.

The protein belongs to the DNA gyrase inhibitor YacG family. As to quaternary structure, interacts with GyrB. Zn(2+) serves as cofactor.

Functionally, inhibits all the catalytic activities of DNA gyrase by preventing its interaction with DNA. Acts by binding directly to the C-terminal domain of GyrB, which probably disrupts DNA binding by the gyrase. The sequence is that of DNA gyrase inhibitor YacG from Proteus mirabilis (strain HI4320).